Reading from the N-terminus, the 240-residue chain is Competence protein ComFC (240 aa).

This sequence belongs to the ComF/GntX family. In terms of assembly, monomer and dimer in solution. Interacts with ComFA and DprA; ComFA-ComFC form rings about 150 Angstroms in diameter with apparent 6-fold symmetry.

Functionally, involved in transformation (genetic competence for DNA uptake). The polypeptide is Competence protein ComFC (comFC) (Bacillus subtilis (strain 168)).